A 365-amino-acid chain; its full sequence is HLA class I histocompatibility antigen, A alpha chain (365 aa).

Residues 1-24 (MAVMAPRTLLLLLSGALALTQTWA) form the signal peptide. The VL9 epitope stretch occupies residues 3–11 (VMAPRTLLL). The alpha-1 stretch occupies residues 25 to 114 (GSHSMRYFFT…LRGYYNQSEA (90 aa)). The Extracellular portion of the chain corresponds to 25–308 (GSHSMRYFFT…ELSSQPTIPI (284 aa)). Y31 provides a ligand contact to a peptide antigen. Y83 is modified (sulfotyrosine). T97 and Y108 together coordinate a peptide antigen. N110 carries an N-linked (GlcNAc...) asparagine glycan. The tract at residues 115–206 (GSHTIQIMYG…ENGKETLQRT (92 aa)) is alpha-2. C125 and C188 are disulfide-bonded. Residues D140, T167, K170, Y183, and Y195 each contribute to the a peptide antigen site. The interval 207-298 (DPPKTHMTHH…GLPKPLTLRW (92 aa)) is alpha-3. In terms of domain architecture, Ig-like C1-type spans 209–295 (PKTHMTHHPI…QHEGLPKPLT (87 aa)). A disulfide bond links C227 and C283. The tract at residues 299–308 (ELSSQPTIPI) is connecting peptide. The chain crosses the membrane as a helical span at residues 309 to 332 (VGIIAGLVLLGAVITGAVVAAVMW). Over 333–365 (RRKSSDRKGGSYTQAASSDSAQGSDVSLTACKV) the chain is Cytoplasmic. The disordered stretch occupies residues 339–365 (RKGGSYTQAASSDSAQGSDVSLTACKV). S343 carries the phosphoserine modification. At Y344 the chain carries Phosphotyrosine. Positions 346 to 359 (QAASSDSAQGSDVS) are enriched in low complexity. Phosphoserine occurs at positions 349, 350, 352, 356, and 359.

The protein belongs to the MHC class I family. In terms of assembly, heterotrimer that consists of an alpha chain HLA-A, a beta chain B2M and a peptide (peptide-HLA-A-B2M). Early in biogenesis, HLA-A-B2M dimer interacts with the components of the peptide-loading complex composed of TAPBP, TAP1-TAP2, TAPBPL, PDIA3/ERP57 and CALR. Interacts with TAP1-TAP2 transporter via TAPBP; this interaction is obligatory for the loading of peptide epitopes delivered to the ER by TAP1-TAP2 transporter. Interacts with TAPBPL; TAPBPL binds peptide-free HLA-A-B2M complexes or those loaded with low affinity peptides, likely facilitating peptide exchange for higher affinity peptides. Only optimally assembled peptide-HLA-B2M trimer translocates to the surface of antigen-presenting cells, where it interacts with TCR and CD8 coreceptor on the surface of T cells. HLA-A (via polymorphic alpha-1 and alpha-2 domains) interacts with antigen-specific TCR (via CDR3 domains). One HLA-A molecule (mainly via nonpolymorphic alpha-3 domain) interacts with one CD8A homodimer (via CDR-like loop); this interaction ensures peptide-HLA-A-B2M recognition by CD8-positive T cells only. Alleles A*23:01; A*24:02 and A*32:01 interact (via Bw4 motif) with KIR3DL1 on NK cells; this interaction is direct. As to quaternary structure, (Microbial infection) Interacts with HHV-8 MIR1 protein. (Microbial infection) Interacts with HTLV-1 accessory protein p12I. Post-translationally, (Microbial infection) Polyubiquitinated in a post ER compartment by interaction with human herpesvirus 8 MIR1 protein. This targets the protein for rapid degradation via the ubiquitin system. In terms of processing, N-linked glycosylation at Asn-110. As to expression, ubiquitous.

It localises to the cell membrane. The protein resides in the endoplasmic reticulum membrane. Its function is as follows. Antigen-presenting major histocompatibility complex class I (MHCI) molecule. In complex with B2M/beta 2 microglobulin displays primarily viral and tumor-derived peptides on antigen-presenting cells for recognition by alpha-beta T cell receptor (TCR) on HLA-A-restricted CD8-positive T cells, guiding antigen-specific T cell immune response to eliminate infected or transformed cells. May also present self-peptides derived from the signal sequence of secreted or membrane proteins, although T cells specific for these peptides are usually inactivated to prevent autoreactivity. Both the peptide and the MHC molecule are recognized by TCR, the peptide is responsible for the fine specificity of antigen recognition and MHC residues account for the MHC restriction of T cells. Typically presents intracellular peptide antigens of 8 to 13 amino acids that arise from cytosolic proteolysis via IFNG-induced immunoproteasome or via endopeptidase IDE/insulin-degrading enzyme. Can bind different peptides containing allele-specific binding motifs, which are mainly defined by anchor residues at position 2 and 9. In terms of biological role, allele A*01:01: Presents a restricted peptide repertoire including viral epitopes derived from IAV NP/nucleoprotein (CTELKLSDY), IAV PB1/polymerase basic protein 1 (VSDGGPNLY), HAdV-11 capsid L3/hexon protein (LTDLGQNLLY), SARS-CoV-2 3a/ORF3a (FTSDYYQLY) as well as tumor peptide antigens including MAGE1 (EADPTGHSY), MAGEA3 (EVDPIGHLY) and WT1 (TSEKRPFMCAY), all having in common a canonical motif with a negatively charged Asp or Glu residue at position 3 and a Tyr anchor residue at the C-terminus. A number of HLA-A*01:01-restricted peptides carry a post-translational modification with oxidation and N-terminal acetylation being the most frequent. Fails to present highly immunogenic peptides from the EBV latent antigens. Functionally, allele A*02:01: A major allele in human populations, presents immunodominant viral epitopes derived from IAV M/matrix protein 1 (GILGFVFTL), HIV-1 env (TLTSCNTSV), HIV-1 gag-pol (ILKEPVHGV), HTLV-1 Tax (LLFGYPVYV), HBV C/core antigen (FLPSDFFPS), HCMV UL83/pp65 (NLVPMVATV) as well as tumor peptide antigens including MAGEA4 (GVYDGREHTV), WT1 (RMFPNAPYL) and CTAG1A/NY-ESO-1 (SLLMWITQC), all having in common hydrophobic amino acids at position 2 and at the C-terminal anchors. Allele A*03:01: Presents viral epitopes derived from IAV NP (ILRGSVAHK), HIV-1 nef (QVPLRPMTYK), HIV-1 gag-pol (AIFQSSMTK), SARS-CoV-2 N/nucleoprotein (KTFPPTEPK) as well as tumor peptide antigens including PMEL (LIYRRRLMK), NODAL (HAYIQSLLK), TRP-2 (RMYNMVPFF), all having in common hydrophobic amino acids at position 2 and Lys or Arg anchor residues at the C-terminus. May also display spliced peptides resulting from the ligation of two separate proteasomal cleavage products that are not contiguous in the parental protein. Its function is as follows. Allele A*11:01: Presents several immunodominant epitopes derived from HIV-1 gag-pol and HHV-4 EBNA4, containing the peptide motif with Val, Ile, Thr, Leu, Tyr or Phe at position 2 and Lys anchor residue at the C-terminus. Important in the control of HIV-1, EBV and HBV infections. Presents an immunodominant epitope derived from SARS-CoV-2 N/nucleoprotein (KTFPPTEPK). In terms of biological role, allele A*23:01: Interacts with natural killer (NK) cell receptor KIR3DL1 and may contribute to functional maturation of NK cells and self-nonself discrimination during innate immune response. Functionally, allele A*24:02: Presents viral epitopes derived from HIV-1 nef (RYPLTFGWCF), EBV lytic- and latent-cycle antigens BRLF1 (TYPVLEEMF), BMLF1 (DYNFVKQLF) and LMP2 (IYVLVMLVL), SARS-CoV nucleocapsid/N (QFKDNVILL), as well as tumor peptide antigens including PRAME (LYVDSLFFL), all sharing a common signature motif, namely an aromatic residue Tyr or Phe at position 2 and a nonhydrophobic anchor residue Phe, Leu or Iso at the C-terminus. Interacts with natural killer (NK) cell receptor KIR3DL1 and may contribute to functional maturation of NK cells and self-nonself discrimination during innate immune response. Allele A*26:01: Presents several epitopes derived from HIV-1 gag-pol (EVIPMFSAL, ETKLGKAGY) and env (LVSDGGPNLY), carrying as anchor residues preferentially Glu at position 1, Val or Thr at position 2 and Tyr at the C-terminus. Its function is as follows. Allele A*29:02: Presents peptides having a common motif, namely a Glu residue at position 2 and Tyr or Leu anchor residues at the C-terminus. In terms of biological role, allele A*32:01: Interacts with natural killer (NK) cell receptor KIR3DL1 and may contribute to functional maturation of NK cells and self-nonself discrimination during innate immune response. Functionally, allele A*68:01: Presents viral epitopes derived from IAV NP (KTGGPIYKR) and HIV-1 tat (ITKGLGISYGR), having a common signature motif namely, Val or Thr at position 2 and positively charged residues Arg or Lys at the C-terminal anchor. Allele A*74:01: Presents immunodominant HIV-1 epitopes derived from gag-pol (GQMVHQAISPR, QIYPGIKVR) and rev (RQIHSISER), carrying an aliphatic residue at position 2 and Arg anchor residue at the C-terminus. May contribute to viral load control in chronic HIV-1 infection. This chain is HLA class I histocompatibility antigen, A alpha chain, found in Homo sapiens (Human).